A 275-amino-acid chain; its full sequence is 3-methyl-2-oxobutanoate hydroxymethyltransferase (275 aa).

The Mg(2+) site is built by Asp-44 and Asp-83. Residues Asp-44 to Ser-45, Asp-83, and Lys-113 contribute to the 3-methyl-2-oxobutanoate site. Glu-115 contributes to the Mg(2+) binding site. Glu-182 acts as the Proton acceptor in catalysis.

This sequence belongs to the PanB family. As to quaternary structure, homodecamer; pentamer of dimers. The cofactor is Mg(2+).

Its subcellular location is the cytoplasm. It catalyses the reaction 3-methyl-2-oxobutanoate + (6R)-5,10-methylene-5,6,7,8-tetrahydrofolate + H2O = 2-dehydropantoate + (6S)-5,6,7,8-tetrahydrofolate. It participates in cofactor biosynthesis; (R)-pantothenate biosynthesis; (R)-pantoate from 3-methyl-2-oxobutanoate: step 1/2. Catalyzes the reversible reaction in which hydroxymethyl group from 5,10-methylenetetrahydrofolate is transferred onto alpha-ketoisovalerate to form ketopantoate. The sequence is that of 3-methyl-2-oxobutanoate hydroxymethyltransferase from Clostridioides difficile (strain 630) (Peptoclostridium difficile).